Here is a 230-residue protein sequence, read N- to C-terminus: RING finger protein 141 (230 aa).

The RING-type zinc finger occupies 154 to 191 (ECCICMDGRVDLILPCAHSFCQKCIDKWSDRHRSCPVC).

The sequence is that of RING finger protein 141 (RNF141) from Gallus gallus (Chicken).